Reading from the N-terminus, the 283-residue chain is NAD kinase (283 aa).

D65 (proton acceptor) is an active-site residue. Residues 65-66, 139-140, R150, R167, D169, 180-185, and Q239 each bind NAD(+); these read DG, ND, and TGYSVS.

Belongs to the NAD kinase family. A divalent metal cation is required as a cofactor.

It localises to the cytoplasm. The enzyme catalyses NAD(+) + ATP = ADP + NADP(+) + H(+). Its function is as follows. Involved in the regulation of the intracellular balance of NAD and NADP, and is a key enzyme in the biosynthesis of NADP. Catalyzes specifically the phosphorylation on 2'-hydroxyl of the adenosine moiety of NAD to yield NADP. In Nitratidesulfovibrio vulgaris (strain DSM 19637 / Miyazaki F) (Desulfovibrio vulgaris), this protein is NAD kinase.